The sequence spans 156 residues: ATP synthase subunit b (156 aa).

The chain crosses the membrane as a helical span at residues 5–25 (LTLIGQAIAFAFFVAFCMKFV).

The protein belongs to the ATPase B chain family. As to quaternary structure, F-type ATPases have 2 components, F(1) - the catalytic core - and F(0) - the membrane proton channel. F(1) has five subunits: alpha(3), beta(3), gamma(1), delta(1), epsilon(1). F(0) has three main subunits: a(1), b(2) and c(10-14). The alpha and beta chains form an alternating ring which encloses part of the gamma chain. F(1) is attached to F(0) by a central stalk formed by the gamma and epsilon chains, while a peripheral stalk is formed by the delta and b chains.

Its subcellular location is the cell inner membrane. In terms of biological role, f(1)F(0) ATP synthase produces ATP from ADP in the presence of a proton or sodium gradient. F-type ATPases consist of two structural domains, F(1) containing the extramembraneous catalytic core and F(0) containing the membrane proton channel, linked together by a central stalk and a peripheral stalk. During catalysis, ATP synthesis in the catalytic domain of F(1) is coupled via a rotary mechanism of the central stalk subunits to proton translocation. Functionally, component of the F(0) channel, it forms part of the peripheral stalk, linking F(1) to F(0). In Acinetobacter baumannii (strain SDF), this protein is ATP synthase subunit b.